The chain runs to 733 residues: FYVE, RhoGEF and PH domain-containing protein 3 (733 aa).

Composition is skewed to polar residues over residues 1–11 (MELGRSSSTPQ), 47–60 (HSSS…STRE), and 106–117 (ETASDSRVPQDN). Positions 1–134 (MELGRSSSTP…GVGEEPDPKV (134 aa)) are disordered. Positions 118–129 (PQEEEDSGVGEE) are enriched in acidic residues. Serine 124 bears the Phosphoserine mark. Residues 153–337 (KLLHIAQELL…STAADHSNAA (185 aa)) form the DH domain. One can recognise a PH 1 domain in the interval 366–465 (ELIKEGSIQK…WIQVIQATVE (100 aa)). Residues 481 to 535 (CSQDEEPTLSPDQPVMSTSSVEPAGVADSNGGTPGIESRKSSSKTRRDKEKPGCK) are disordered. A compositionally biased stretch (basic and acidic residues) spans 517–533 (ESRKSSSKTRRDKEKPG). The segment at 528–584 (DKEKPGCKSCGETFNSITKRRYRCKLCGEVICRKCSEFKAENSKQSRVCRECFLEEP) adopts an FYVE-type zinc-finger fold. Positions 534, 537, 551, 554, 559, 562, 576, and 579 each coordinate Zn(2+). Disordered regions lie at residues 586–612 (VPPS…DPRP) and 712–733 (GDTA…TDTP). Residues 612–711 (PSLLCGTLNL…WLKALGTAVH (100 aa)) form the PH 2 domain. Threonine 732 carries the post-translational modification Phosphothreonine.

In terms of tissue distribution, detected in adult brain, spleen, lung and skeletal muscle. Detected in embryos from 7 dpc to 17 dpc.

It is found in the cytoplasm. Its subcellular location is the cytoskeleton. Promotes the formation of filopodia. May activate CDC42, a member of the Ras-like family of Rho- and Rac proteins, by exchanging bound GDP for free GTP. Plays a role in regulating the actin cytoskeleton and cell shape. The polypeptide is FYVE, RhoGEF and PH domain-containing protein 3 (Fgd3) (Mus musculus (Mouse)).